The primary structure comprises 40 residues: Muscarinic m1-toxin4 (40 aa).

Cys3 and Cys24 form a disulfide bridge.

It belongs to the three-finger toxin family. Short-chain subfamily. Aminergic toxin sub-subfamily. In terms of assembly, monomer. Post-translationally, contains 4 disulfide bonds. As to expression, expressed by the venom gland.

The protein resides in the secreted. In terms of biological role, binds irreversibly and specifically to M1 (CHRM1) muscarinic acetylcholine receptors, blocking further binding of antagonists and preventing the action of agonists. The chain is Muscarinic m1-toxin4 from Dendroaspis angusticeps (Eastern green mamba).